We begin with the raw amino-acid sequence, 184 residues long: Adenine phosphoribosyltransferase 2 (184 aa).

Belongs to the purine/pyrimidine phosphoribosyltransferase family. As to quaternary structure, homodimer.

Its subcellular location is the cytoplasm. The enzyme catalyses AMP + diphosphate = 5-phospho-alpha-D-ribose 1-diphosphate + adenine. It participates in purine metabolism; AMP biosynthesis via salvage pathway; AMP from adenine: step 1/1. In terms of biological role, catalyzes a salvage reaction resulting in the formation of AMP, that is energically less costly than de novo synthesis. The protein is Adenine phosphoribosyltransferase 2 of Rhizobium etli (strain ATCC 51251 / DSM 11541 / JCM 21823 / NBRC 15573 / CFN 42).